The chain runs to 303 residues: Taste receptor type 2 member 13 (303 aa).

At 1–7 (MKSALPS) the chain is on the extracellular side. Residues 8–28 (IFTLVIIAEFIIGNLSNGFIV) traverse the membrane as a helical segment. At 29–55 (LINCIDWVSKRELSSVDKLLIILAISR) the chain is on the cytoplasmic side. The chain crosses the membrane as a helical span at residues 56–76 (IGLIWEILVSWFLALHYLAIF). The Extracellular portion of the chain corresponds to 77-85 (VSGTGLRIM). The chain crosses the membrane as a helical span at residues 86 to 106 (IFSWIVSNHFNLWLATILSIF). Topologically, residues 107-128 (YLLKIASFSSPAFLYLKWRVNK) are cytoplasmic. Residues 129-149 (VILLILLGTLVFLFLNLIQIN) traverse the membrane as a helical segment. Over 150 to 184 (MHIKDWLDRYERNTTWNFSMSDFETFSVSVKFTMT) the chain is Extracellular. N-linked (GlcNAc...) asparagine glycosylation is found at asparagine 162 and asparagine 166. The chain crosses the membrane as a helical span at residues 185–205 (MFSLTPFTVAFISFLLLIFSL). The Cytoplasmic portion of the chain corresponds to 206–232 (QKHLQKMQLNYKGHRDPKTKVHTNALK). A helical membrane pass occupies residues 233–253 (IVISFLLFYASFFLCVLXSWI). Residues 254–261 (SELYQNTV) are Extracellular-facing. Residues 262–282 (IYMLCETIGVFYPSSHSFLLI) traverse the membrane as a helical segment. Over 283–303 (LGNAKLRQAFLLVAAKVWAKR) the chain is Cytoplasmic.

It belongs to the G-protein coupled receptor T2R family.

The protein localises to the membrane. Receptor that may play a role in the perception of bitterness and is gustducin-linked. May play a role in sensing the chemical composition of the gastrointestinal content. The activity of this receptor may stimulate alpha gustducin, mediate PLC-beta-2 activation and lead to the gating of TRPM5. The protein is Taste receptor type 2 member 13 (TAS2R13) of Gorilla gorilla gorilla (Western lowland gorilla).